A 400-amino-acid polypeptide reads, in one-letter code: MKNYHAPDEKGFFGEHGGLYVSETLIPALKELEQAYNEAKNDPEFWAEFRRDLKHYVGRPSPVYHAARLSEHLGGAQIWLKREDLNHTGAHKVNNTIGQALLARRMGKKRVIAETGAGQHGVASATVAARFGMTSDVYMGADDIQRQMPNVFRMKLLGANVIGVDSGSRTLKDAMNEAMREWVARVDDTFYIIGTAAGPAPYPEMVRDFQCVIGNEAKAQMQEATGRQPDVAVACVGGGSNAIGLFYPYIEEENVRLVGVEAGGLDVDTPDHAAPITSGAPIGVLHGFRSYLMQDENGQVLGTHSVSAGLDYPGIGPEHSHLHDIKRVEYTVAKDDEALEAFDLLCRFEGIIPALESSHVVGSGDKTRRKMGKDQVILVNLSGRGDKDINTVAKLKGIEL.

An N6-(pyridoxal phosphate)lysine modification is found at K92.

Belongs to the TrpB family. In terms of assembly, tetramer of two alpha and two beta chains. The cofactor is pyridoxal 5'-phosphate.

The enzyme catalyses (1S,2R)-1-C-(indol-3-yl)glycerol 3-phosphate + L-serine = D-glyceraldehyde 3-phosphate + L-tryptophan + H2O. It participates in amino-acid biosynthesis; L-tryptophan biosynthesis; L-tryptophan from chorismate: step 5/5. The beta subunit is responsible for the synthesis of L-tryptophan from indole and L-serine. The sequence is that of Tryptophan synthase beta chain from Neisseria gonorrhoeae.